Consider the following 100-residue polypeptide: Large ribosomal subunit protein bL21 (100 aa).

It belongs to the bacterial ribosomal protein bL21 family. Part of the 50S ribosomal subunit. Contacts protein L20.

In terms of biological role, this protein binds to 23S rRNA in the presence of protein L20. In Ureaplasma urealyticum serovar 10 (strain ATCC 33699 / Western), this protein is Large ribosomal subunit protein bL21.